The following is a 329-amino-acid chain: PDZ and LIM domain protein 1 (329 aa).

An N-acetylthreonine modification is found at T2. The region spanning 3–85 (TQQIDLQGPG…NLTLTVARSE (83 aa)) is the PDZ domain. A phosphoserine mark is found at S90 and S130. The residue at position 144 (Y144) is a Phosphotyrosine. Positions 258–317 (PMCDKCGTGIVGVFVKLRDRHRHPECYVCTDCGTNLKQKGHFFVEDQIYCEKHARERVTP) constitute an LIM zinc-binding domain. C260, C263, H280, C283, C286, C289, C307, and H310 together coordinate Zn(2+). T316 bears the Phosphothreonine mark. Phosphotyrosine is present on Y321.

As to quaternary structure, interacts with ACTN1, ACTN2 and ACTN4. Interacts with PDLIM4. As to expression, strongly expressed in the heart and skeletal muscle, moderately expressed in the spleen, small intestine, colon, placenta, and lung. A lower level expression is seen in liver, thymus, kidney, prostate and pancreas and is not found in the brain, testis, ovary, and peripheral blood leukocytes.

It localises to the cytoplasm. The protein resides in the cytoskeleton. Its subcellular location is the myofibril. It is found in the sarcomere. The protein localises to the z line. Cytoskeletal protein that may act as an adapter that brings other proteins (like kinases) to the cytoskeleton. Involved in assembly, disassembly and directioning of stress fibers in fibroblasts. Required for the localization of ACTN1 and PALLD to stress fibers. Required for cell migration and in maintaining cell polarity of fibroblasts. This chain is PDZ and LIM domain protein 1 (PDLIM1), found in Homo sapiens (Human).